The primary structure comprises 602 residues: Type 2 DNA topoisomerase 6 subunit B (602 aa).

ATP contacts are provided by residues Asn-40, Asp-71, 92 to 93 (SR), 102 to 109 (GQQGIGIS), and Lys-425.

This sequence belongs to the TOP6B family. In terms of assembly, homodimer. Heterotetramer of two Top6A and two Top6B chains.

The catalysed reaction is ATP-dependent breakage, passage and rejoining of double-stranded DNA.. Its function is as follows. Relaxes both positive and negative superturns and exhibits a strong decatenase activity. This is Type 2 DNA topoisomerase 6 subunit B from Archaeoglobus fulgidus (strain ATCC 49558 / DSM 4304 / JCM 9628 / NBRC 100126 / VC-16).